The following is a 239-amino-acid chain: Uridylate kinase (239 aa).

An ATP-binding site is contributed by lysine 13 to glycine 16. Glycine 55 is a binding site for UMP. Residues glycine 56 and arginine 60 each coordinate ATP. Residues aspartate 75 and threonine 136–threonine 143 contribute to the UMP site. The ATP site is built by threonine 163, glutamine 164, tyrosine 169, and aspartate 172.

This sequence belongs to the UMP kinase family. As to quaternary structure, homohexamer.

It localises to the cytoplasm. It carries out the reaction UMP + ATP = UDP + ADP. Its pathway is pyrimidine metabolism; CTP biosynthesis via de novo pathway; UDP from UMP (UMPK route): step 1/1. Inhibited by UTP. Catalyzes the reversible phosphorylation of UMP to UDP. This chain is Uridylate kinase, found in Bartonella quintana (strain Toulouse) (Rochalimaea quintana).